The chain runs to 390 residues: Ketoisovalerate reductase BEA2 (390 aa).

70 to 75 (GPGNIG) is a binding site for NADP(+). Lys-285 functions as the Proton donor in the catalytic mechanism. The substrate site is built by Asn-289 and Asn-293.

It belongs to the ketopantoate reductase family.

It carries out the reaction (R)-2-hydroxy-3-methylbutanoate + NADP(+) = 3-methyl-2-oxobutanoate + NADPH + H(+). With respect to regulation, the reductase activity is increased by Mg(2+) (195%), Ca(2+) (169%) and slightly increased by K(+) (123%). The reduction activity is inhibited by Fe(2+) and Co(2+), and almost totally inhibited by Cu(2+), Mn(2+), Zn(2+) and Fe(3+) (from 3% to 9% residual activity respectively). The chelating agent EDTA had little effect, suggesting Mg(2+) and Ca(2+) are not determining factors, though they could promote the reductase enzyme activity. Ketoisovalerate reductase; part of the gene cluster that mediates the biosynthesis of beauvericin (BEA), a non-ribosomal cyclic hexadepsipeptide that shows antibiotic, antifungal, insecticidal, and cancer cell antiproliferative and antihaptotactic activity. Ketoisovalerate reductase BEA2 catalyzes the NADPH-specific reduction of ketoisovaleric acid to hydroxyisovalerate, a precursor for beauvericin biosynthesis. The nonribosomal cyclodepsipeptide synthetase BEA1 then catalyzes the formation of beauvericin via condensation and cyclization of 3 dipeptidol monomers, each composed of one unit of hydroxyisovalerate and one unit of N-methyl-phenylalanine. This Gibberella intermedia (Bulb rot disease fungus) protein is Ketoisovalerate reductase BEA2.